Reading from the N-terminus, the 261-residue chain is Putative phosphite transport system permease protein HtxE (261 aa).

In terms of domain architecture, ABC transmembrane type-1 spans 47 to 253 (EATTETVEVL…VFVFVLDQLQ (207 aa)). Transmembrane regions (helical) follow at residues 122-142 (LIVA…GVLA), 203-220 (RNLR…GGIG), and 229-249 (MFQY…VFVL).

It belongs to the binding-protein-dependent transport system permease family.

The protein resides in the cell inner membrane. In terms of biological role, probably forms part of a binding-protein-dependent hypophosphite transporter. The chain is Putative phosphite transport system permease protein HtxE (htxE) from Stutzerimonas stutzeri (Pseudomonas stutzeri).